Reading from the N-terminus, the 988-residue chain is Fanconi-associated nuclease 1 (988 aa).

Positions 1–39 (MESQTGRKSARRLSMTKKKSQSVCPIKERTSNGGAASIT) are disordered. Residues 8 to 20 (KSARRLSMTKKKS) show a composition bias toward basic residues. A UBZ4-type zinc finger spans residues 49–77 (KLACPLCGKLVPRYKINEHIDSQCQNFLV). Zn(2+)-binding residues include Cys-52, Cys-55, His-67, and Cys-72. Disordered stretches follow at residues 87-115 (TKAP…TSPF), 164-256 (TRVS…NTTE), and 269-307 (SSIE…TTQE). Over residues 89–98 (APSNSALASN) the composition is skewed to polar residues. Composition is skewed to basic and acidic residues over residues 99-111 (NERE…KDAD) and 167-182 (SDNE…RSQK). Over residues 183 to 195 (ENCMNSLTFGSER) the composition is skewed to polar residues. The segment covering 224–238 (SDSSISSDVHTSSSS) has biased composition (low complexity). A compositionally biased stretch (basic and acidic residues) spans 272 to 283 (ERGDESKVKSDQ). The span at 284-303 (TEASSSAYDVPTSKSPIKSK) shows a compositional bias: polar residues. Residues 636 to 663 (SRGVEILQRLKRYEDAVEQLRNLLSQSV) adopt a coiled-coil conformation. Mn(2+)-binding residues include Glu-805, Asp-931, Glu-946, and Val-947. A VRR-NUC domain is found at 866-978 (VETLQDLIAD…GADVEVCHVT (113 aa)).

This sequence belongs to the FAN1 family. As to quaternary structure, interacts with fancd2 (when monoubiquitinated). Requires Mn(2+) as cofactor. Mg(2+) is required as a cofactor.

The protein localises to the nucleus. The enzyme catalyses Hydrolytically removes 5'-nucleotides successively from the 3'-hydroxy termini of 3'-hydroxy-terminated oligonucleotides.. In terms of biological role, nuclease required for the repair of DNA interstrand cross-links (ICL) recruited at sites of DNA damage by monoubiquitinated FANCD2. Specifically involved in repair of ICL-induced DNA breaks by being required for efficient homologous recombination, probably in the resolution of homologous recombination intermediates. Acts as a 5'-3' exonuclease that anchors at a cut end of DNA and cleaves DNA successively at every third nucleotide, allowing to excise an ICL from one strand through flanking incisions. Probably keeps excising with 3'-flap annealing until it reaches and unhooks the ICL. Acts at sites that have a 5'-terminal phosphate anchor at a nick or a 1- or 2-nucleotide flap and is augmented by a 3' flap. Also has endonuclease activity toward 5'-flaps. The protein is Fanconi-associated nuclease 1 (fan1) of Danio rerio (Zebrafish).